Consider the following 566-residue polypeptide: Putative ABC transporter ATP-binding protein BC_2655 (566 aa).

ABC transporter domains follow at residues 5–246 (ISFE…GLRE) and 300–533 (LKVE…ANLR). ATP contacts are provided by residues 39 to 46 (GRSGSGKS) and 333 to 340 (GHNGAGKS).

The protein belongs to the ABC transporter superfamily.

The protein resides in the cell membrane. Functionally, probably part of an ABC transporter complex. Responsible for energy coupling to the transport system. The protein is Putative ABC transporter ATP-binding protein BC_2655 of Bacillus cereus (strain ATCC 14579 / DSM 31 / CCUG 7414 / JCM 2152 / NBRC 15305 / NCIMB 9373 / NCTC 2599 / NRRL B-3711).